The sequence spans 710 residues: PWWP domain-containing DNA repair factor 3A (710 aa).

Residues 106-160 (QESSAGTGRADRSLRGKPMEHVSSPCDSNSSSLPRGDVLGSSRPHRRRPCVQQSL) form a disordered region. Over residues 114-125 (RADRSLRGKPME) the composition is skewed to basic and acidic residues. Residues 128–137 (SSPCDSNSSS) show a composition bias toward low complexity. Ser161 carries the post-translational modification Phosphoserine. Disordered regions lie at residues 177–204 (KKGL…ESGS) and 230–398 (NGSS…EEPP). The segment covering 288–297 (PSACSEPGEC) has biased composition (low complexity). A phosphoserine mark is found at Ser374 and Ser375. A compositionally biased stretch (polar residues) spans 375–385 (SEESMGSNSMR). A PWWP domain is found at 411 to 472 (VGMLVWHKHK…KHFDCKEKQT (62 aa)).

The protein belongs to the PWWP3A family. Interacts with TP53BP1 (via BRCT domain); the interaction is not dependent on its phosphorylation status. Binds nucleosomes. Interacts with trimethylated 'Lys-36' of histone H3 (H3K36me3) (in vitro).

It localises to the nucleus. In terms of biological role, involved in the DNA damage response pathway by contributing to the maintenance of chromatin architecture. Recruited to the vicinity of DNA breaks by TP53BP1 and plays an accessory role to facilitate damage-induced chromatin changes and promoting chromatin relaxation. Required for efficient DNA repair and cell survival following DNA damage. The protein is PWWP domain-containing DNA repair factor 3A of Homo sapiens (Human).